The primary structure comprises 173 residues: GAIIAGAALGFNVHQTVLKALGQVSRKIAIGVDNESGGTWTALNAYFRSGTTDVILPEFVPNQKALLYSGQKDTGPVATGAVGVLAYYMSDGNTLGVMFSVPFDYNLYSNWWDVKVYRGRRRADQAMYEGLLYGIPYGGDNGWHARKLGYGLKGRGFMKSSAQSILEIHVTKA.

Residues 6–25 (GAALGFNVHQTVLKALGQVS) form an N-terminal region region. The phosphocholine site is built by Ser49, Val82, Ser100, Pro102, Tyr128, and Tyr133. Residues 100–115 (SVPFDYNLYSNWWDVK) are trp-rich region, which is important for the binding to lipid membrane.

It belongs to the actinoporin family. Sea anemone subfamily. Octamer or nonamer in membranes. Monomer in the soluble state.

It is found in the secreted. The protein resides in the nematocyst. The protein localises to the target cell membrane. In terms of biological role, pore-forming protein that forms cations-selective hydrophilic pores of around 1 nm and causes cardiac stimulation and cytolysis. Pore formation is a multi-step process that involves specific recognition of membrane sphingomyelin (but neither cholesterol nor phosphatidylcholine) using aromatic rich region and adjacent phosphocholine (POC) binding site, firm binding to the membrane (mainly driven by hydrophobic interactions) accompanied by the transfer of the N-terminal region to the lipid-water interface and finally pore formation after oligomerization of monomers. Cytolytic effects include red blood cells hemolysis, platelet aggregation and lysis, cytotoxic and cytostatic effects on fibroblasts. Lethality in mammals has been ascribed to severe vasospasm of coronary vessels, cardiac arrhythmia, and inotropic effects. This is DELTA-actitoxin-Oor1b from Oulactis orientalis (Japan anemone).